We begin with the raw amino-acid sequence, 641 residues long: Tegument protein UL35 (641 aa).

Disordered stretches follow at residues 353–373, 500–572, and 587–641; these read ERGE…PREA, ASSS…PRQR, and AYSH…LRHL. The segment covering 358–367 has biased composition (acidic residues); sequence GDEDEEQEND. Positions 500–563 are enriched in low complexity; sequence ASSSSASSSS…LSGSHGISSA (64 aa). Positions 589 to 599 are enriched in basic residues; it reads SHHRRHRRRRS. The span at 632–641 shows a compositional bias: basic and acidic residues; that stretch reads DDLAENLRHL.

This sequence belongs to the herpesviridae pp85 family. As to quaternary structure, interacts with UL82. Interacts with isoform UL35A. Interacts with host UBP7; this interaction significantly inhibits the ability of USP7 to form nuclear bodies. Interacts with host DCAF1 (via C-terminus). Interacts with host SNX5; this interaction allows proper gB localization during viral assembly. Interacts with host TBK1; this interaction prevents type I interferon production. Interacts with UL82. Interacts with isoform UL35. Interacts with host UBP7; this interaction significantly inhibits the ability of USP7 to form nuclear bodies. Interacts with host SNX5; this interaction allows proper gB localization during viral assembly.

It localises to the virion tegument. The protein resides in the host nucleus. The protein localises to the host cytoplasm. Plays important role in immediate-early gene expression through interaction with UL82. Forms nuclear bodies in host nucleus, independently of PML. In turn, UL35 nuclear bodies associate with and remodel PML bodies. Through interaction with host DCAF1, causes cells to accumulate in the G2 phase of the cell cycle by inducing a DNA damage response. Regulates viral assembly by controlling the localization of the essential gB through regulation of a retrograde transport pathway. This modulation occurs via binding and inhibition of host sorting nexin 5/SNX5. Also plays a role in the inhibition of pattern recognition receptor-mediated type I interferon signaling at the level of TBK1. Functionally, promotes cytoplasmic UL82 accumulation and inhibits UL35-containing nuclear bodies formation. Regulates viral assembly by controlling the localization of the essential gB through regulation of a retrograde transport pathway. This modulation occurs via binding and inhibition of host sorting nexin 5/SNX5. This is Tegument protein UL35 (UL35) from Homo sapiens (Human).